The sequence spans 277 residues: Formamidopyrimidine-DNA glycosylase (277 aa).

Pro2 acts as the Schiff-base intermediate with DNA in catalysis. Catalysis depends on Glu3, which acts as the Proton donor. Lys58 acts as the Proton donor; for beta-elimination activity in catalysis. Residues His94, Arg113, and Arg156 each contribute to the DNA site. An FPG-type zinc finger spans residues 241 to 277 (LVYGREGVPCPNCGAEHPIQRITQAGRSTFFCPTCQK). Arg267 (proton donor; for delta-elimination activity) is an active-site residue.

Belongs to the FPG family. As to quaternary structure, monomer. Zn(2+) is required as a cofactor.

It catalyses the reaction Hydrolysis of DNA containing ring-opened 7-methylguanine residues, releasing 2,6-diamino-4-hydroxy-5-(N-methyl)formamidopyrimidine.. The enzyme catalyses 2'-deoxyribonucleotide-(2'-deoxyribose 5'-phosphate)-2'-deoxyribonucleotide-DNA = a 3'-end 2'-deoxyribonucleotide-(2,3-dehydro-2,3-deoxyribose 5'-phosphate)-DNA + a 5'-end 5'-phospho-2'-deoxyribonucleoside-DNA + H(+). In terms of biological role, involved in base excision repair of DNA damaged by oxidation or by mutagenic agents. Acts as a DNA glycosylase that recognizes and removes damaged bases. Has a preference for oxidized purines, such as 7,8-dihydro-8-oxoguanine (8-oxoG). Has AP (apurinic/apyrimidinic) lyase activity and introduces nicks in the DNA strand. Cleaves the DNA backbone by beta-delta elimination to generate a single-strand break at the site of the removed base with both 3'- and 5'-phosphates. The polypeptide is Formamidopyrimidine-DNA glycosylase (Gluconobacter oxydans (strain 621H) (Gluconobacter suboxydans)).